Here is a 203-residue protein sequence, read N- to C-terminus: Leucyl/phenylalanyl-tRNA--protein transferase (203 aa).

The protein belongs to the L/F-transferase family.

It localises to the cytoplasm. The catalysed reaction is N-terminal L-lysyl-[protein] + L-leucyl-tRNA(Leu) = N-terminal L-leucyl-L-lysyl-[protein] + tRNA(Leu) + H(+). It carries out the reaction N-terminal L-arginyl-[protein] + L-leucyl-tRNA(Leu) = N-terminal L-leucyl-L-arginyl-[protein] + tRNA(Leu) + H(+). The enzyme catalyses L-phenylalanyl-tRNA(Phe) + an N-terminal L-alpha-aminoacyl-[protein] = an N-terminal L-phenylalanyl-L-alpha-aminoacyl-[protein] + tRNA(Phe). In terms of biological role, functions in the N-end rule pathway of protein degradation where it conjugates Leu, Phe and, less efficiently, Met from aminoacyl-tRNAs to the N-termini of proteins containing an N-terminal arginine or lysine. This chain is Leucyl/phenylalanyl-tRNA--protein transferase, found in Chelativorans sp. (strain BNC1).